A 339-amino-acid chain; its full sequence is Nicotinate-nucleotide--dimethylbenzimidazole phosphoribosyltransferase (339 aa).

Catalysis depends on Glu-306, which acts as the Proton acceptor.

Belongs to the CobT family.

It carries out the reaction 5,6-dimethylbenzimidazole + nicotinate beta-D-ribonucleotide = alpha-ribazole 5'-phosphate + nicotinate + H(+). The protein operates within nucleoside biosynthesis; alpha-ribazole biosynthesis; alpha-ribazole from 5,6-dimethylbenzimidazole: step 1/2. Its function is as follows. Catalyzes the synthesis of alpha-ribazole-5'-phosphate from nicotinate mononucleotide (NAMN) and 5,6-dimethylbenzimidazole (DMB). This Brucella melitensis biotype 1 (strain ATCC 23456 / CCUG 17765 / NCTC 10094 / 16M) protein is Nicotinate-nucleotide--dimethylbenzimidazole phosphoribosyltransferase.